Reading from the N-terminus, the 510-residue chain is 11S globulin (510 aa).

An N-terminal signal peptide occupies residues 1 to 23 (MAKPILLSISLCLVALVNGCLAQ). 2 disulfides stabilise this stretch: Cys-35/Cys-68 and Cys-111/Cys-325. Residues 38–257 (KRLVALEPSN…AFNVDTETAR (220 aa)) enclose the Cupin type-1 1 domain. Disordered stretches follow at residues 194-239 (AGNP…VFSG) and 284-319 (WSREEQEREERKERERERESESERRQSRRGGRDDNG). Positions 284–318 (WSREEQEREERKERERERESESERRQSRRGGRDDN) are enriched in basic and acidic residues. Positions 318 to 323 (NGLEET) match the NGXEET; peptidase recognition motif motif. Residues 331 to 480 (ENIGDPSRAD…ALQIPREDAR (150 aa)) form the Cupin type-1 2 domain. Positions 487–510 (QESTLVRSRPSSSRSSRSERRAEV) are disordered.

Belongs to the 11S seed storage protein (globulins) family. Homohexamer. Can assemble in other multimeric configurations. Proteolytically processed from a single precursor to produce an acidic and a basic chain that are linked by a disulfide bond. Expressed in endosperm of the seed.

Seed storage protein. The sequence is that of 11S globulin from Juglans nigra (Black walnut).